The chain runs to 258 residues: ATP synthase subunit a (258 aa).

A run of 5 helical transmembrane segments spans residues 38-58, 94-114, 118-138, 193-213, and 215-235; these read KPVWFLWLGAAITFLFMYVGA, WFPYSLTLFIFLLVLNIIGLF, YPVTSNISFTATLALFTFVLT, ILAGHLIIFVFLSLILYFGLP, and AFVSVPFAVVFYAFEIFVAVI.

Belongs to the ATPase A chain family. F-type ATPases have 2 components, CF(1) - the catalytic core - and CF(0) - the membrane proton channel. CF(1) has five subunits: alpha(3), beta(3), gamma(1), delta(1), epsilon(1). CF(0) has three main subunits: a(1), b(2) and c(9-12). The alpha and beta chains form an alternating ring which encloses part of the gamma chain. CF(1) is attached to CF(0) by a central stalk formed by the gamma and epsilon chains, while a peripheral stalk is formed by the delta and b chains.

Its subcellular location is the cell membrane. Its function is as follows. Key component of the proton channel; it plays a direct role in the translocation of protons across the membrane. The chain is ATP synthase subunit a from Rubrobacter xylanophilus (strain DSM 9941 / JCM 11954 / NBRC 16129 / PRD-1).